The chain runs to 446 residues: ATP-dependent RNA helicase SUB2 (446 aa).

Residue serine 2 is modified to N-acetylserine. 2 positions are modified to phosphoserine: serine 13 and serine 37. Positions 23-41 (ASKAAEAGETGAATSATEG) are enriched in low complexity. A disordered region spans residues 23 to 52 (ASKAAEAGETGAATSATEGDNNNNTAAGDK). Residues 62 to 90 (TGFKDFLLKPELSRAIIDCGFEHPSEVQQ) carry the Q motif motif. Residues 93-268 (IPQSIHGTDV…RRFLQNPLEI (176 aa)) enclose the Helicase ATP-binding domain. 106 to 113 (AKSGLGKT) is a binding site for ATP. At threonine 169 the chain carries Phosphothreonine. The DECD box motif lies at 215-218 (DECD). A Helicase C-terminal domain is found at 280 to 441 (GLQQYYIKLE…EFPEEGIDPS (162 aa)).

The protein belongs to the DEAD box helicase family. DECD subfamily. Component of the TREX complex composed of at least SUB2, TEX1, YRA1 and the four THO complex components: HPR1, MFT1, THO2 and THP1. Interacts with HPR1, YRA1, and YRA2. SUB2 may mediate the interaction between the THO complex and YRA1. Associates with growing mRNP complexes during transcription. This association requires the presence of HPR1. Also interacts with SAC3. Interacts with THO1 in the presence of RNA; this interaction facilitates RNA binding of SUB2.

It localises to the nucleus. It catalyses the reaction ATP + H2O = ADP + phosphate + H(+). Functionally, ATP-binding RNA helicase component of the TREX complex involved in transcription elongation and required for the export of mRNA out of the nucleus. SUB2 also plays a role in pre-mRNA splicing and spliceosome assembly. May be involved in rDNA and telomeric silencing, and maintenance of genome integrity. Associates with THO1, which facilitates RNA binding of SUB2 and likely plays a role in mRNA export. The sequence is that of ATP-dependent RNA helicase SUB2 (SUB2) from Saccharomyces cerevisiae (strain ATCC 204508 / S288c) (Baker's yeast).